An 87-amino-acid polypeptide reads, in one-letter code: Omega-theraphotoxin-Gr1a (87 aa).

Positions 1-24 are cleaved as a signal peptide; sequence MKAQIFVVVLGLAALSVLCYGSEA. A propeptide spanning residues 25-49 is cleaved from the precursor; the sequence is DESALHEEIFQLLAASDEVPKPQER. 3 disulfides stabilise this stretch: Cys51/Cys65, Cys58/Cys70, and Cys64/Cys79. Val85 bears the Valine amide mark.

As to expression, expressed by the venom gland.

The protein localises to the secreted. Its function is as follows. Inhibits P/Q- (Cav2.1/CACNA1A) and N-type (Cav2.2/CACNA1B) voltage-gated calcium channel by modifying voltage-dependent gating. It selectively and reversibly blocks the calcium channels coupled to glutamate release. Also inhibits potassium channels (Kv2.1/KCNB1) with lower affinity. Has also been shown to weakly inhibit Kv11.1/KCNH2/ERG1, Kv1.2/KCNA2, Kv1.3/KCNA3, Nav1.5/SCN5A, Nav1.7/SCN9A and TRPV1. The chain is Omega-theraphotoxin-Gr1a from Grammostola rosea (Chilean rose tarantula).